The chain runs to 427 residues: MSHWFHRNPIKPTEFVKFDLKGVLTTDTCSKICGELRLRRDKLVSQFKNASNDLEEVTKEFNEYLRLFAGFLIEIQSSMVELENKDAGNKNSKLIPLIRFKWGNSMLPQAATEVSDTWFEALSMIQCMAMWLTKHAASMAGKDEVRESDAKECLQCLRQAGGMFQYVKDESSRLSGANEVEGSDFDPKVMETYILTATAEAQEVIVARAIEMKHDDGLISSLAAVTASIFSKADQCLNNLPDESFARWRRYLQLKHHFYLAYAFAFLGQKQLSEDKCGEAVRACKQGIAEYGVAKEMAAMYATATGPGTRIKPEQHLFFRRIEPLLNRHLEKAERENGFIYHQKVPDEIPQLDVEATYGLAKLDSFTYPPPAESWNTAVYSAFDLSKANMPDFSKIKKSKSKLDPVHEEKIYQTEKDPSNSSGCVIA.

The 427-residue stretch at 1-427 (MSHWFHRNPI…PSNSSGCVIA (427 aa)) folds into the BRO1 domain.

It belongs to the BROX family.

In Caenorhabditis elegans, this protein is BRO1 domain-containing protein BROX homolog.